The chain runs to 292 residues: MEITASLVKELRERTGVGMMECKKALSENAGNIDAAVEWLRKSGLVKADKKAGRIAAEGRIVVVHDGGKAVLVEINSETDFVAKDSHFLAFAEAVAQAALVAGAVDVEALKSVKLPSGETVEEARAAVIAKIGENVRVRRLARIDSANNVAAYVHGGRIGVLVEVKGGDVELARGIAMHVAAMNPPYNKVADVSAEFLEKEKEIELSKMSEKDKSKPADILEKIISGKINKIVKEVTLYGQPYVLNADQSVEQVVKAAGADVIGFQRMEVGEGIEKIVEDYASEVMKQVGLS.

Positions 79–82 are involved in Mg(2+) ion dislocation from EF-Tu; that stretch reads TDFV.

This sequence belongs to the EF-Ts family.

The protein resides in the cytoplasm. Its function is as follows. Associates with the EF-Tu.GDP complex and induces the exchange of GDP to GTP. It remains bound to the aminoacyl-tRNA.EF-Tu.GTP complex up to the GTP hydrolysis stage on the ribosome. The protein is Elongation factor Ts of Xylella fastidiosa (strain 9a5c).